The sequence spans 325 residues: Apoptosis-enhancing nuclease (325 aa).

The Nucleolar localization signal motif lies at 27-35 (RKRHKRRSR). A disordered region spans residues 85-105 (RAGSGSAPCSRRPAPGKASGP). Residues 110–266 (CVAIDCEMVG…EDATTAMELY (157 aa)) enclose the Exonuclease domain. A Nuclear localization signal motif is present at residues 165-188 (RQHMRKAVPFQVAQKEILKLLKGK). The segment at 281 to 325 (LWTCPEDREPDSSTDMEQYMEDQYWPDDLAHGSRGGAREAQDRRN) is disordered. The span at 308–325 (DLAHGSRGGAREAQDRRN) shows a compositional bias: basic and acidic residues.

It localises to the nucleus. The protein localises to the nucleolus. Functionally, exonuclease with activity against single- and double-stranded DNA and RNA. Mediates p53-induced apoptosis. When induced by p53 following DNA damage, digests double-stranded DNA to form single-stranded DNA and amplifies DNA damage signals, leading to enhancement of apoptosis. This chain is Apoptosis-enhancing nuclease (AEN), found in Homo sapiens (Human).